Reading from the N-terminus, the 264-residue chain is Alkaline ceramidase 1 (264 aa).

Over 1-27 the chain is Lumenal; sequence MPSIFAYQSSEVDWCESNFQYSELVAE. 5 residues coordinate Ca(2+): Asp13, Trp14, Glu16, Asn18, and Glu27. A helical transmembrane segment spans residues 28-48; that stretch reads FYNTFSNIPFFIFGPLMMLLM. Residues 49–57 lie on the Cytoplasmic side of the membrane; the sequence is HPYAQKRSR. A helical membrane pass occupies residues 58-78; it reads YIYVVWVLFMIIGLFSMYFHM. His77 serves as a coordination point for Zn(2+). At 79–81 the chain is on the lumenal side; sequence TLS. The chain crosses the membrane as a helical span at residues 82–102; that stretch reads FLGQLLDEIAILWLLGSGYSI. Topologically, residues 103 to 119 are cytoplasmic; sequence WMPRCYFPSFLGGNRSQ. The helical transmembrane segment at 120 to 137 threads the bilayer; it reads FIRLVFITTVVSTLLSFL. A topological domain (lumenal) is located at residue Arg138. The helical transmembrane segment at 139 to 159 threads the bilayer; that stretch reads PTVNAYALNSIALHILYIVCQ. The Cytoplasmic segment spans residues 160 to 176; it reads EYRKTSNKELRHLIEVS. The chain crosses the membrane as a helical span at residues 177–197; that stretch reads VVLWAVALTSWISDRLLCSFW. Topologically, residues 198–206 are lumenal; that stretch reads QRIHFFYLH. Residues His206 and His210 each contribute to the Zn(2+) site. Residues 207-227 form a helical membrane-spanning segment; that stretch reads SIWHVLISITFPYGMVTMALV. Topologically, residues 228 to 264 are cytoplasmic; the sequence is DANYEMPGETLKVRYWPRDSWPVGLPYVEIRGDDKDC.

It belongs to the alkaline ceramidase family. Requires Zn(2+) as cofactor. As to expression, mainly expressed in epidermis.

Its subcellular location is the endoplasmic reticulum membrane. The enzyme catalyses an N-acylsphing-4-enine + H2O = sphing-4-enine + a fatty acid. It carries out the reaction N-tetracosanoyl-sphing-4-enine + H2O = tetracosanoate + sphing-4-enine. It catalyses the reaction an N-acylsphinganine + H2O = sphinganine + a fatty acid. The catalysed reaction is N-(9Z-octadecenoyl)-sphing-4-enine + H2O = sphing-4-enine + (9Z)-octadecenoate. The enzyme catalyses N-(15Z-tetracosenoyl)-sphing-4-enine + H2O = (15Z)-tetracosenoate + sphing-4-enine. Its pathway is lipid metabolism; sphingolipid metabolism. Its activity is regulated as follows. Inhibited by sphingosine. Activity is Ca(2+)-dependent. In terms of biological role, endoplasmic reticulum ceramidase that catalyzes the hydrolysis of ceramides into sphingosine and free fatty acids at alkaline pH. Ceramides, sphingosine, and its phosphorylated form sphingosine-1-phosphate are bioactive lipids that mediate cellular signaling pathways regulating several biological processes including cell proliferation, apoptosis and differentiation. Exhibits a strong substrate specificity towards the natural stereoisomer of ceramides with D-erythro-sphingosine as a backbone and has a higher activity towards very long-chain unsaturated fatty acids like the C24:1-ceramide. May also hydrolyze dihydroceramides to produce dihydrosphingosine. ACER1 is a skin-specific ceramidase that regulates the levels of ceramides, sphingosine and sphingosine-1-phosphate in the epidermis, mediates the calcium-induced differentiation of epidermal keratinocytes and more generally plays an important role in skin homeostasis. The polypeptide is Alkaline ceramidase 1 (Homo sapiens (Human)).